A 145-amino-acid chain; its full sequence is Ribonuclease H (145 aa).

Residues 1 to 141 (MQEVIIYSDG…ADALANRGVA (141 aa)) enclose the RNase H type-1 domain. Residues D9, E47, D69, and D133 each contribute to the Mg(2+) site.

It belongs to the RNase H family. In terms of assembly, monomer. Mg(2+) serves as cofactor.

Its subcellular location is the cytoplasm. It catalyses the reaction Endonucleolytic cleavage to 5'-phosphomonoester.. Endonuclease that specifically degrades the RNA of RNA-DNA hybrids. The polypeptide is Ribonuclease H (Cupriavidus pinatubonensis (strain JMP 134 / LMG 1197) (Cupriavidus necator (strain JMP 134))).